Consider the following 121-residue polypeptide: MIQPQTHLNVADNSGARELMCIRIIGASNRRYARIGDVIVAVIKEAIPNTPLERSEVIRAVVVRTCKELKRDNGMIIRYDDNAAVIIDQEGNPKGTRIFGAIARELRQKFAKIVSLAPEVL.

In terms of assembly, component of the chloroplast large ribosomal subunit (LSU). Mature 70S chloroplast ribosomes of higher plants consist of a small (30S) and a large (50S) subunit. The 30S small subunit contains 1 molecule of ribosomal RNA (16S rRNA) and 24 different proteins. The 50S large subunit contains 3 rRNA molecules (23S, 5S and 4.5S rRNA) and 33 different proteins.

It localises to the plastid. The protein localises to the chloroplast. Functionally, component of the chloroplast ribosome (chloro-ribosome), a dedicated translation machinery responsible for the synthesis of chloroplast genome-encoded proteins, including proteins of the transcription and translation machinery and components of the photosynthetic apparatus. The sequence is that of Large ribosomal subunit protein uL14c from Spinacia oleracea (Spinach).